The sequence spans 293 residues: 4-hydroxy-tetrahydrodipicolinate synthase (293 aa).

A pyruvate-binding site is contributed by T47. The active-site Proton donor/acceptor is Y136. Catalysis depends on K164, which acts as the Schiff-base intermediate with substrate. I206 is a binding site for pyruvate.

It belongs to the DapA family. In terms of assembly, homotetramer; dimer of dimers.

The protein resides in the cytoplasm. The enzyme catalyses L-aspartate 4-semialdehyde + pyruvate = (2S,4S)-4-hydroxy-2,3,4,5-tetrahydrodipicolinate + H2O + H(+). It functions in the pathway amino-acid biosynthesis; L-lysine biosynthesis via DAP pathway; (S)-tetrahydrodipicolinate from L-aspartate: step 3/4. Its function is as follows. Catalyzes the condensation of (S)-aspartate-beta-semialdehyde [(S)-ASA] and pyruvate to 4-hydroxy-tetrahydrodipicolinate (HTPA). The protein is 4-hydroxy-tetrahydrodipicolinate synthase of Listeria welshimeri serovar 6b (strain ATCC 35897 / DSM 20650 / CCUG 15529 / CIP 8149 / NCTC 11857 / SLCC 5334 / V8).